The following is a 154-amino-acid chain: Ribosome maturation factor RimP (154 aa).

It belongs to the RimP family.

Its subcellular location is the cytoplasm. Its function is as follows. Required for maturation of 30S ribosomal subunits. This is Ribosome maturation factor RimP from Salmonella agona (strain SL483).